A 440-amino-acid polypeptide reads, in one-letter code: Chromosome partition protein MukF (440 aa).

The interval 208–236 (LSETSGTLRELQDTLEAAGDKLQANLLRI) is leucine-zipper.

The protein belongs to the MukF family. As to quaternary structure, interacts, and probably forms a ternary complex, with MukE and MukB via its C-terminal region. The complex formation is stimulated by calcium or magnesium. It is required for an interaction between MukE and MukB.

It localises to the cytoplasm. It is found in the nucleoid. Functionally, involved in chromosome condensation, segregation and cell cycle progression. May participate in facilitating chromosome segregation by condensation DNA from both sides of a centrally located replisome during cell division. Not required for mini-F plasmid partitioning. Probably acts via its interaction with MukB and MukE. Overexpression results in anucleate cells. It has a calcium binding activity. This chain is Chromosome partition protein MukF, found in Salmonella gallinarum (strain 287/91 / NCTC 13346).